We begin with the raw amino-acid sequence, 77 residues long: Conotoxin ArMKLT2-0122 (77 aa).

The signal sequence occupies residues 1 to 22 (MKLTCVLIVAVLFLTACQLIAA). A propeptide spanning residues 23–44 (DDSRDLKRFSRRKMRDGMLNTK) is cleaved from the precursor. Cystine bridges form between Cys50/Cys65, Cys57/Cys68, and Cys64/Cys73.

This sequence belongs to the conotoxin O1 superfamily. In terms of tissue distribution, expressed by the venom duct.

The protein resides in the secreted. The chain is Conotoxin ArMKLT2-0122 from Conus arenatus (Sand-dusted cone).